Reading from the N-terminus, the 438-residue chain is Histidine--tRNA ligase (438 aa).

Belongs to the class-II aminoacyl-tRNA synthetase family. As to quaternary structure, homodimer.

The protein localises to the cytoplasm. It carries out the reaction tRNA(His) + L-histidine + ATP = L-histidyl-tRNA(His) + AMP + diphosphate + H(+). The protein is Histidine--tRNA ligase of Aromatoleum aromaticum (strain DSM 19018 / LMG 30748 / EbN1) (Azoarcus sp. (strain EbN1)).